A 939-amino-acid chain; its full sequence is Isoleucine--tRNA ligase (939 aa).

The short motif at proline 57–histidine 67 is the 'HIGH' region element. Residue glutamate 563 participates in L-isoleucyl-5'-AMP binding. A 'KMSKS' region motif is present at residues lysine 604 to serine 608. Residue lysine 607 participates in ATP binding. Residues cysteine 902, cysteine 905, cysteine 922, and cysteine 925 each contribute to the Zn(2+) site.

Belongs to the class-I aminoacyl-tRNA synthetase family. IleS type 1 subfamily. In terms of assembly, monomer. Zn(2+) serves as cofactor.

It localises to the cytoplasm. It carries out the reaction tRNA(Ile) + L-isoleucine + ATP = L-isoleucyl-tRNA(Ile) + AMP + diphosphate. Functionally, catalyzes the attachment of isoleucine to tRNA(Ile). As IleRS can inadvertently accommodate and process structurally similar amino acids such as valine, to avoid such errors it has two additional distinct tRNA(Ile)-dependent editing activities. One activity is designated as 'pretransfer' editing and involves the hydrolysis of activated Val-AMP. The other activity is designated 'posttransfer' editing and involves deacylation of mischarged Val-tRNA(Ile). In Methylococcus capsulatus (strain ATCC 33009 / NCIMB 11132 / Bath), this protein is Isoleucine--tRNA ligase.